The primary structure comprises 498 residues: DEAD-box ATP-dependent RNA helicase 6 (498 aa).

Residues 1–109 (MDPRARYPPG…WKAQLKLPPQ (109 aa)) are disordered. Residues 33-49 (QHQHQHQQPPHPHHHQY) are compositionally biased toward basic residues. 2 stretches are compositionally biased toward low complexity: residues 50 to 61 (VQRQPQPQQTPH) and 75 to 86 (AAEAAGASEQKA). The short motif at 124–152 (NEFEDYFLKRELLMGIYEKGFERPSPIQE) is the Q motif element. Positions 155 to 325 (IPIALTGSDI…DKYLPKPYVI (171 aa)) constitute a Helicase ATP-binding domain. 168–175 (AKNGTGKT) lines the ATP pocket. The DEAD box signature appears at 273-276 (DEAD). A Helicase C-terminal domain is found at 335–495 (GITQFYAFVE…PIPPQIDRAI (161 aa)).

Belongs to the DEAD box helicase family. DDX6/DHH1 subfamily.

The protein resides in the cytoplasm. It localises to the P-body. The enzyme catalyses ATP + H2O = ADP + phosphate + H(+). ATP-dependent RNA helicase involved in mRNA turnover, and more specifically in mRNA decapping. In Oryza sativa subsp. japonica (Rice), this protein is DEAD-box ATP-dependent RNA helicase 6.